A 59-amino-acid polypeptide reads, in one-letter code: UPF0434 protein Rsph17029_0141 (59 aa).

This sequence belongs to the UPF0434 family.

The polypeptide is UPF0434 protein Rsph17029_0141 (Cereibacter sphaeroides (strain ATCC 17029 / ATH 2.4.9) (Rhodobacter sphaeroides)).